A 359-amino-acid polypeptide reads, in one-letter code: Peptide chain release factor 1 (359 aa).

At Q236 the chain carries N5-methylglutamine. Residues 286–305 form a disordered region; sequence KKEMERSTMRKSQIGSGDRS.

Belongs to the prokaryotic/mitochondrial release factor family. Post-translationally, methylated by PrmC. Methylation increases the termination efficiency of RF1.

Its subcellular location is the cytoplasm. Functionally, peptide chain release factor 1 directs the termination of translation in response to the peptide chain termination codons UAG and UAA. The sequence is that of Peptide chain release factor 1 from Wolbachia pipientis wMel.